The primary structure comprises 111 residues: Beta-defensin 126 (111 aa).

The first 20 residues, M1–G20, serve as a signal peptide directing secretion. Positions N21–D63 are in vitro binds to LPS, mediates antimicrobial activity and inhibits LPS-mediated inflammation. Disulfide bonds link C27/C58, C34/C52, and C38/C59.

The protein belongs to the beta-defensin family. Homodimer or homooligomer; disulfide-linked. In terms of processing, O-glycosylated; glycans contain alpha(2,3)-linked sialic acids.

Its subcellular location is the secreted. In terms of biological role, highly glycosylated atypical beta-defensin involved in several aspects of sperm function. Facilitates sperm transport in the female reproductive tract and contributes to sperm protection against immunodetection; both functions are probably implicating the negative surface charge provided by its O-linked oligosaccharides in the sperm glycocalyx. Involved in binding of sperm to oviductal epithelial cells to form a sperm reservoir until ovulation. Release from the sperm surface during capacitation and ovaluation by an elevation of oviductal fluid pH is unmasking other surface components and allows sperm to penetrate the cumulus matrix and bind to the zona pellucida of the oocyte. In vitro has antimicrobial activity and may inhibit LPS-mediated inflammation. This Gorilla gorilla gorilla (Western lowland gorilla) protein is Beta-defensin 126 (DEFB126).